Here is a 242-residue protein sequence, read N- to C-terminus: 7-cyano-7-deazaguanine synthase (242 aa).

12–22 (FSGGQDSATCL) lines the ATP pocket. 4 residues coordinate Zn(2+): Cys-200, Cys-215, Cys-218, and Cys-221.

It belongs to the QueC family. The cofactor is Zn(2+).

It catalyses the reaction 7-carboxy-7-deazaguanine + NH4(+) + ATP = 7-cyano-7-deazaguanine + ADP + phosphate + H2O + H(+). The protein operates within purine metabolism; 7-cyano-7-deazaguanine biosynthesis. In terms of biological role, catalyzes the ATP-dependent conversion of 7-carboxy-7-deazaguanine (CDG) to 7-cyano-7-deazaguanine (preQ(0)). The polypeptide is 7-cyano-7-deazaguanine synthase (Gluconobacter oxydans (strain 621H) (Gluconobacter suboxydans)).